The sequence spans 209 residues: Ribosomal RNA large subunit methyltransferase E (209 aa).

Gly-63, Trp-65, Asp-83, Asp-99, and Asp-124 together coordinate S-adenosyl-L-methionine. Catalysis depends on Lys-164, which acts as the Proton acceptor.

The protein belongs to the class I-like SAM-binding methyltransferase superfamily. RNA methyltransferase RlmE family.

The protein resides in the cytoplasm. The enzyme catalyses uridine(2552) in 23S rRNA + S-adenosyl-L-methionine = 2'-O-methyluridine(2552) in 23S rRNA + S-adenosyl-L-homocysteine + H(+). Its function is as follows. Specifically methylates the uridine in position 2552 of 23S rRNA at the 2'-O position of the ribose in the fully assembled 50S ribosomal subunit. The polypeptide is Ribosomal RNA large subunit methyltransferase E (Shewanella sp. (strain ANA-3)).